The primary structure comprises 395 residues: F-box/LRR-repeat protein 12 (395 aa).

Residues 13–61 (TSIIHLPDDCLSFIFQRLDSVADHDSFGLTCHRWLNIQNISRRSLQFQC) form the F-box domain. LRR repeat units follow at residues 75–100 (NPDV…SLSG), 101–126 (CTVL…YLDC), 127–152 (CFGI…SLYR), 154–177 (NISD…NLSY), 178–203 (CPLV…KISN), 226–250 (SCQL…NISG), 252–278 (SCYI…NLRM), 279–304 (CRTV…NLAL), 305–330 (CHEV…HVNR), and 331–356 (CRNL…YMNG).

This Arabidopsis thaliana (Mouse-ear cress) protein is F-box/LRR-repeat protein 12 (FBL12).